The chain runs to 213 residues: Glycerol-3-phosphate acyltransferase (213 aa).

The next 6 membrane-spanning stretches (helical) occupy residues 2–22 (ITIV…GLWI), 54–74 (MATF…PIMF), 80–100 (SPLI…FAGF), 110–130 (AGVV…VFFG), 143–163 (VTAS…GFIL), and 165–185 (NYDP…IIRH).

Belongs to the PlsY family. As to quaternary structure, probably interacts with PlsX.

The protein localises to the cell membrane. It catalyses the reaction an acyl phosphate + sn-glycerol 3-phosphate = a 1-acyl-sn-glycero-3-phosphate + phosphate. It participates in lipid metabolism; phospholipid metabolism. Catalyzes the transfer of an acyl group from acyl-phosphate (acyl-PO(4)) to glycerol-3-phosphate (G3P) to form lysophosphatidic acid (LPA). This enzyme utilizes acyl-phosphate as fatty acyl donor, but not acyl-CoA or acyl-ACP. The polypeptide is Glycerol-3-phosphate acyltransferase (Streptococcus pneumoniae (strain Taiwan19F-14)).